Here is a 555-residue protein sequence, read N- to C-terminus: Glypican-6 (555 aa).

The N-terminal stretch at 1 to 23 (MPSWIGAVILPLLGLLLSLPAGA) is a signal peptide. Low complexity predominate over residues 348 to 357 (PALRSARSAP). The segment at 348-376 (PALRSARSAPENFNTRFRPYNPEERPTTA) is disordered. The GPI-anchor amidated serine moiety is linked to residue S529. The propeptide at 530–555 (SAAQRGHSLLSWSLTCIVLALQRLCR) is removed in mature form.

This sequence belongs to the glypican family.

Its subcellular location is the cell membrane. The protein resides in the secreted. It localises to the extracellular space. Its function is as follows. Cell surface proteoglycan that bears heparan sulfate. Putative cell surface coreceptor for growth factors, extracellular matrix proteins, proteases and anti-proteases. Enhances migration and invasion of cancer cells through WNT5A signaling. The polypeptide is Glypican-6 (GPC6) (Pongo abelii (Sumatran orangutan)).